The sequence spans 169 residues: Copper-resistant cuproprotein CopI (169 aa).

The N-terminal stretch at 1 to 20 is a signal peptide; it reads MIKKTLLVIALTFTVTTAFA. Residues histidine 98, cysteine 153, histidine 158, and methionine 163 each coordinate Cu(2+).

The protein belongs to the CopI family.

The protein localises to the periplasm. In terms of biological role, involved in copper tolerance. Mediates copper tolerance in aerobiosis. May also mediate tolerance under anaerobiosis. Not required for virulence or colonization in the mouse model. This is Copper-resistant cuproprotein CopI from Vibrio cholerae serotype O1 (strain ATCC 39315 / El Tor Inaba N16961).